Reading from the N-terminus, the 360-residue chain is Probable protein phosphatase 2C 54 (360 aa).

A disordered region spans residues 1 to 39; it reads MCVEESEGAERLDFGEPAAAAADAGKSKSKSPDELPSPR. In terms of domain architecture, PPM-type phosphatase spans 65-325; that stretch reads RSGDWSDIGG…DNLTAVLVSF (261 aa). Mn(2+) contacts are provided by aspartate 109, glycine 110, aspartate 273, and aspartate 316.

It belongs to the PP2C family. Mg(2+) is required as a cofactor. Mn(2+) serves as cofactor.

The enzyme catalyses O-phospho-L-seryl-[protein] + H2O = L-seryl-[protein] + phosphate. It carries out the reaction O-phospho-L-threonyl-[protein] + H2O = L-threonyl-[protein] + phosphate. The polypeptide is Probable protein phosphatase 2C 54 (Oryza sativa subsp. japonica (Rice)).